The chain runs to 779 residues: Tricorn protease-interacting factor F3 (779 aa).

Residues E102 and 231–235 (GAMEN) each bind substrate. H266 is a Zn(2+) binding site. Catalysis depends on E267, which acts as the Proton acceptor. Zn(2+) contacts are provided by H270 and E289.

This sequence belongs to the peptidase M1 family. Part of the tricorn proteolytic complex. It depends on Zn(2+) as a cofactor.

The protein localises to the cytoplasm. Functionally, proteases F1, F2 and F3 degrade oligopeptides produced by Tricorn (themselves probably produced by the proteasome), yielding free amino acids. This Thermoplasma volcanium (strain ATCC 51530 / DSM 4299 / JCM 9571 / NBRC 15438 / GSS1) protein is Tricorn protease-interacting factor F3 (trf3).